The chain runs to 360 residues: Zinc finger protein ztf-2 (360 aa).

The segment at 19-41 (LSSPEKEHRRKRRRGEVANPSNT) is disordered. 3 consecutive C2H2-type zinc fingers follow at residues 87 to 109 (RTCSTCGYQGKWVSEMIRHKRVH), 115 to 138 (FKCRYCSRTSKWKADLIRHVAKTH), and 180 to 203 (YRCQLCSFEDERVSVLNSHVSHLH). Over residues 248-260 (PLSPCRSESSSDS) the composition is skewed to low complexity. The interval 248–272 (PLSPCRSESSSDSGIQTDPEEEASI) is disordered.

In terms of tissue distribution, expressed in pharyngeal epithelium/arcade, which connects the pharynx to the mouth.

Functionally, transcription factor. Represses gene expression, probably via binding to DNA consensus sequence 5'-[AT][CT]TTCC[AC][AG]-3' in promoter regions. May play a role in pharynx morphogenesis. The chain is Zinc finger protein ztf-2 from Caenorhabditis elegans.